The chain runs to 260 residues: DNA repair protein RecO (260 aa).

The protein belongs to the RecO family.

In terms of biological role, involved in DNA repair and RecF pathway recombination. In Paracidovorax citrulli (strain AAC00-1) (Acidovorax citrulli), this protein is DNA repair protein RecO.